Reading from the N-terminus, the 260-residue chain is Snake venom serine protease pallabin (260 aa).

Positions 1 to 18 (MVLIRVLANLLILQLSYA) are cleaved as a signal peptide. Positions 19 to 24 (QKSSKL) are excised as a propeptide. Positions 25 to 251 (VIGGDECNIN…HLDWIENIIA (227 aa)) constitute a Peptidase S1 domain. 6 disulfide bridges follow: Cys31–Cys163, Cys50–Cys66, Cys98–Cys258, Cys142–Cys212, Cys174–Cys191, and Cys202–Cys227. His65 functions as the Charge relay system in the catalytic mechanism. N-linked (GlcNAc...) asparagine glycosylation occurs at Asn103. Catalysis depends on Asp110, which acts as the Charge relay system. The Charge relay system role is filled by Ser206.

This sequence belongs to the peptidase S1 family. Snake venom subfamily. In terms of assembly, monomer. Expressed by the venom gland.

It is found in the secreted. Snake venom serine protease that may act in the hemostasis system of the prey. The protein is Snake venom serine protease pallabin (JZTHR5) of Gloydius halys (Chinese water mocassin).